Consider the following 717-residue polypeptide: CRISPR-associated protein Cas8b (717 aa).

Disordered stretches follow at residues 263–283 (IGVF…DQSW) and 698–717 (HEKE…STTN). The span at 701–717 (EDEDDQDTEEPAESTTN) shows a compositional bias: acidic residues.

The protein localises to the cytoplasm. CRISPR (clustered regularly interspaced short palindromic repeat) is an adaptive immune system that provides protection against mobile genetic elements (viruses, transposable elements and conjugative plasmids). CRISPR clusters contain sequences complementary to antecedent mobile elements and target invading nucleic acids. CRISPR clusters are transcribed and processed into CRISPR RNA (crRNA). Plasmid targeted by CRISPR locus P1 transform wild-type cells very poorly. This subunit might be involved in stabilizing crRNA. The protein is CRISPR-associated protein Cas8b of Haloferax volcanii (strain ATCC 29605 / DSM 3757 / JCM 8879 / NBRC 14742 / NCIMB 2012 / VKM B-1768 / DS2) (Halobacterium volcanii).